The chain runs to 704 residues: Tetratricopeptide repeat protein 12 (704 aa).

Threonine 71 carries the post-translational modification Phosphothreonine. 3 TPR repeats span residues 105-138 (ADAL…LKDM), 139-172 (KVLY…DENC), and 173-206 (TKAY…NPKL).

It localises to the cytoplasm. In terms of biological role, cytoplasmic protein that plays a role in the proper assembly of dynein arm complexes in motile cilia in both respiratory cells and sperm flagella. The polypeptide is Tetratricopeptide repeat protein 12 (Ttc12) (Mus musculus (Mouse)).